The sequence spans 534 residues: Blue-light-activated protein (534 aa).

The PAS domain maps to 20 to 93; it reads GKDIFFAAVE…QSIRDAIDQR (74 aa). S-4a-FMN cysteine is present on cysteine 70. The region spanning 94-148 is the PAC domain; that stretch reads VDISTEILNYRKDGSSFWNALFISPVYNDAGELIYFFASQLDISRRRDAEEALRQ. The 230-residue stretch at 161–390 folds into the Histidine kinase domain; it reads GIAHDFNNLL…TLRLYFPVDE (230 aa). Histidine 164 carries the post-translational modification Phosphohistidine; by autocatalysis. The Response regulatory domain maps to 411 to 527; it reads RILIVEDRPD…DLARKVRQVL (117 aa). Aspartate 461 is modified (4-aspartylphosphate).

FMN binds covalently to cysteine after exposure to blue light and this bond is spontaneously broken in the dark.

The catalysed reaction is ATP + protein L-histidine = ADP + protein N-phospho-L-histidine.. In terms of biological role, photosensitive kinase and response regulator that is involved in increased bacterial virulence upon exposure to light. The chain is Blue-light-activated protein from Pseudomonas syringae pv. syringae (strain B728a).